The sequence spans 222 residues: Glutathione S-transferase A4 (222 aa).

The residue at position 1 (Met1) is an N-acetylmethionine. Residues 3-83 form the GST N-terminal domain; the sequence is TKPKLHYPNG…YIADKHHLFG (81 aa). Glutathione-binding positions include Tyr9, 54 to 55, and 67 to 68; these read QV and QT. The region spanning 85 to 208 is the GST C-terminal domain; the sequence is DLKERTLIDM…EPGSKKKPPP (124 aa).

The protein belongs to the GST superfamily. Alpha family. Homodimer.

The protein localises to the cytoplasm. It carries out the reaction RX + glutathione = an S-substituted glutathione + a halide anion + H(+). In terms of biological role, conjugation of reduced glutathione to a wide number of exogenous and endogenous hydrophobic electrophiles. The polypeptide is Glutathione S-transferase A4 (GSTA4) (Bos taurus (Bovine)).